The sequence spans 355 residues: Probable dual-specificity RNA methyltransferase RlmN (355 aa).

Residue glutamate 107 is the Proton acceptor of the active site. One can recognise a Radical SAM core domain in the interval 113–341 (TDKRLTVCVS…VSVRYSRGLE (229 aa)). A disulfide bridge connects residues cysteine 120 and cysteine 346. Residues cysteine 127, cysteine 131, and cysteine 134 each contribute to the [4Fe-4S] cluster site. Residues 174 to 175 (GE), serine 204, 227 to 229 (SLH), and asparagine 303 contribute to the S-adenosyl-L-methionine site. The active-site S-methylcysteine intermediate is the cysteine 346.

This sequence belongs to the radical SAM superfamily. RlmN family. [4Fe-4S] cluster is required as a cofactor.

It is found in the cytoplasm. It catalyses the reaction adenosine(2503) in 23S rRNA + 2 reduced [2Fe-2S]-[ferredoxin] + 2 S-adenosyl-L-methionine = 2-methyladenosine(2503) in 23S rRNA + 5'-deoxyadenosine + L-methionine + 2 oxidized [2Fe-2S]-[ferredoxin] + S-adenosyl-L-homocysteine. The catalysed reaction is adenosine(37) in tRNA + 2 reduced [2Fe-2S]-[ferredoxin] + 2 S-adenosyl-L-methionine = 2-methyladenosine(37) in tRNA + 5'-deoxyadenosine + L-methionine + 2 oxidized [2Fe-2S]-[ferredoxin] + S-adenosyl-L-homocysteine. In terms of biological role, specifically methylates position 2 of adenine 2503 in 23S rRNA and position 2 of adenine 37 in tRNAs. In Trichormus variabilis (strain ATCC 29413 / PCC 7937) (Anabaena variabilis), this protein is Probable dual-specificity RNA methyltransferase RlmN.